The chain runs to 97 residues: MSEYLILCSILFSLGAFGVLYRRNILVMFMCIELMLNSVNLLMVYFSALHNDQSGQVFVFFIMAVAAAEITIGLAILVMIFRHLGSINIDSLKKLKW.

The next 3 helical transmembrane spans lie at 1-21 (MSEY…GVLY), 25-45 (ILVM…LMVY), and 57-77 (VFVF…LAIL).

It belongs to the complex I subunit 4L family. NDH-1 is composed of 14 different subunits. Subunits NuoA, H, J, K, L, M, N constitute the membrane sector of the complex.

The protein resides in the cell inner membrane. It carries out the reaction a quinone + NADH + 5 H(+)(in) = a quinol + NAD(+) + 4 H(+)(out). NDH-1 shuttles electrons from NADH, via FMN and iron-sulfur (Fe-S) centers, to quinones in the respiratory chain. The immediate electron acceptor for the enzyme in this species is believed to be a menaquinone. Couples the redox reaction to proton translocation (for every two electrons transferred, four hydrogen ions are translocated across the cytoplasmic membrane), and thus conserves the redox energy in a proton gradient. This Cytophaga hutchinsonii (strain ATCC 33406 / DSM 1761 / CIP 103989 / NBRC 15051 / NCIMB 9469 / D465) protein is NADH-quinone oxidoreductase subunit K.